A 666-amino-acid chain; its full sequence is Semaphorin-7A (666 aa).

Residues 1-21 (MTPPPPGRAAPSAPRARVPGP) are disordered. Positions 1–44 (MTPPPPGRAAPSAPRARVPGPPARLGLPLRLRLLLLLWAAAASA) are cleaved as a signal peptide. A compositionally biased stretch (low complexity) spans 9-21 (AAPSAPRARVPGP). In terms of domain architecture, Sema spans 53-490 (RIFAVWKGHV…SQWEVSQVPL (438 aa)). Asn105 carries an N-linked (GlcNAc...) asparagine glycan. An intrachain disulfide couples Cys120 to Cys126. An Asymmetric dimethylarginine modification is found at Arg135. A disulfide bridge connects residues Cys143 and Cys152. Residues Asn157 and Asn258 are each glycosylated (N-linked (GlcNAc...) asparagine). 7 cysteine pairs are disulfide-bonded: Cys266-Cys366, Cys291-Cys335, Cys493-Cys511, Cys500-Cys541, Cys503-Cys518, Cys566-Cys613, and Cys587-Cys596. Residues 267–269 (RGD) form an interaction with integrins region. The short motif at 267-269 (RGD) is the Cell attachment site element. A glycan (N-linked (GlcNAc...) asparagine) is linked at Asn330. In terms of domain architecture, Ig-like C2-type spans 544-629 (PKPDKAPLQK…YFREAQHWQL (86 aa)). Residue Asn602 is glycosylated (N-linked (GlcNAc...) asparagine). Ala648 is lipidated: GPI-anchor amidated alanine. Residues 649–666 (ASLWLGVLPTLTLGLLVH) constitute a propeptide, removed in mature form.

This sequence belongs to the semaphorin family. As to quaternary structure, interacts with ITGA1 and ITGB1. Interacts with PLXNC1. Detected in skin keratinocytes and on endothelial cells from skin blood vessels (at protein level). Expressed in fibroblasts, keratinocytes, melanocytes, placenta, testis, ovary, spleen, brain, spinal cord, lung, heart, adrenal gland, lymph nodes, thymus, intestine and kidney.

The protein localises to the cell membrane. Its function is as follows. Plays an important role in integrin-mediated signaling and functions both in regulating cell migration and immune responses. Promotes formation of focal adhesion complexes, activation of the protein kinase PTK2/FAK1 and subsequent phosphorylation of MAPK1 and MAPK3. Promotes production of pro-inflammatory cytokines by monocytes and macrophages. Plays an important role in modulating inflammation and T-cell-mediated immune responses. Promotes axon growth in the embryonic olfactory bulb. Promotes attachment, spreading and dendrite outgrowth in melanocytes. This is Semaphorin-7A (SEMA7A) from Homo sapiens (Human).